The sequence spans 784 residues: Armadillo repeat-containing X-linked protein 2 (784 aa).

Residues 1–6 are Mitochondrial intermembrane-facing; sequence MSRARD. Mitochondrion outer membrane (MOM)-targeting sequence regions lie at residues 1–6 and 26–40; these read MSRARD and KYTR…RLTK. The helical; Signal-anchor transmembrane segment at 7–27 threads the bilayer; the sequence is AGCVAAGIVIGASAWYCVYKY. The Cytoplasmic portion of the chain corresponds to 28–784; sequence TRGKDQKKKR…VKVIKLVNKF (757 aa). Disordered stretches follow at residues 328-353, 388-461, and 488-522; these read TSGG…RTAS, HSGA…ELGM, and PESE…TIPM. Residues 396–418 show a composition bias toward low complexity; the sequence is GTSGSSKTAATGKKAAPGAHTGA. A compositionally biased stretch (acidic residues) spans 488–508; sequence PESEEGESGWTDTESDSDSEP. 3 ARM repeats span residues 528 to 568, 570 to 609, and 650 to 689; these read PYEI…NNAN, SCNQ…NLSE, and ITND…NFAE.

This sequence belongs to the eutherian X-chromosome-specific Armcx family. Widely expressed in the adult nervous tissue, especially in the forebrain, including the cerebral cortex, hippocampus and thalamus.

Its subcellular location is the mitochondrion. The protein localises to the mitochondrion outer membrane. Its function is as follows. May regulate the dynamics and distribution of mitochondria in neural cells. This chain is Armadillo repeat-containing X-linked protein 2 (Armcx2), found in Mus musculus (Mouse).